The following is a 194-amino-acid chain: Small ribosomal subunit protein uS4c (194 aa).

One can recognise an S4 RNA-binding domain in the interval 84–144; the sequence is MRLDTLLYRT…KEILKSLNDK (61 aa).

This sequence belongs to the universal ribosomal protein uS4 family. Part of the 30S ribosomal subunit. Contacts protein S5. The interaction surface between S4 and S5 is involved in control of translational fidelity.

It localises to the plastid. The protein localises to the chloroplast. Its function is as follows. One of the primary rRNA binding proteins, it binds directly to 16S rRNA where it nucleates assembly of the body of the 30S subunit. In terms of biological role, with S5 and S12 plays an important role in translational accuracy. This Bigelowiella natans (Pedinomonas minutissima) protein is Small ribosomal subunit protein uS4c (rps4).